The chain runs to 581 residues: Arginine--tRNA ligase (581 aa).

The 'HIGH' region signature appears at 126–136 (PNLAKEMHVGH).

Belongs to the class-I aminoacyl-tRNA synthetase family. In terms of assembly, monomer.

It localises to the cytoplasm. The catalysed reaction is tRNA(Arg) + L-arginine + ATP = L-arginyl-tRNA(Arg) + AMP + diphosphate. This chain is Arginine--tRNA ligase, found in Shewanella halifaxensis (strain HAW-EB4).